A 396-amino-acid polypeptide reads, in one-letter code: 1-deoxy-D-xylulose 5-phosphate reductoisomerase (396 aa).

NADPH is bound by residues Thr-15, Gly-16, Ser-17, Ile-18, Gly-41, and Asn-129. Lys-130 lines the 1-deoxy-D-xylulose 5-phosphate pocket. Glu-131 is an NADPH binding site. Position 155 (Asp-155) interacts with Mn(2+). The 1-deoxy-D-xylulose 5-phosphate site is built by Ser-156, Glu-157, Ser-182, and His-205. Mn(2+) is bound at residue Glu-157. Gly-211 serves as a coordination point for NADPH. Residues Ser-218, Asn-223, Lys-224, and Glu-227 each contribute to the 1-deoxy-D-xylulose 5-phosphate site. Glu-227 contributes to the Mn(2+) binding site.

The protein belongs to the DXR family. Requires Mg(2+) as cofactor. Mn(2+) is required as a cofactor.

It catalyses the reaction 2-C-methyl-D-erythritol 4-phosphate + NADP(+) = 1-deoxy-D-xylulose 5-phosphate + NADPH + H(+). It participates in isoprenoid biosynthesis; isopentenyl diphosphate biosynthesis via DXP pathway; isopentenyl diphosphate from 1-deoxy-D-xylulose 5-phosphate: step 1/6. Catalyzes the NADPH-dependent rearrangement and reduction of 1-deoxy-D-xylulose-5-phosphate (DXP) to 2-C-methyl-D-erythritol 4-phosphate (MEP). This Xanthomonas euvesicatoria pv. vesicatoria (strain 85-10) (Xanthomonas campestris pv. vesicatoria) protein is 1-deoxy-D-xylulose 5-phosphate reductoisomerase.